Reading from the N-terminus, the 356-residue chain is Aromatic dipeptide epimerase (356 aa).

Residues T136 and 161 to 163 contribute to the substrate site; that span reads KVK. 3 residues coordinate Mg(2+): D191, E219, and D244. Substrate-binding positions include K268 and 320 to 322; that span reads DLD.

The protein belongs to the mandelate racemase/muconate lactonizing enzyme family. Mg(2+) serves as cofactor.

Has epimerase activity with a variety of hydrophobic dipeptides (in vitro). Enzyme activity is highest with L-Phe-L-Tyr, but is still relatively low, suggesting that L-Phe-L-Tyr is not the physiological substrate. In Herpetosiphon aurantiacus (strain ATCC 23779 / DSM 785 / 114-95), this protein is Aromatic dipeptide epimerase.